A 146-amino-acid chain; its full sequence is Deoxyuridine 5'-triphosphate nucleotidohydrolase (146 aa).

Substrate contacts are provided by residues 66–68 (RSG), Asn79, and 83–85 (TID).

This sequence belongs to the dUTPase family. It depends on Mg(2+) as a cofactor.

It carries out the reaction dUTP + H2O = dUMP + diphosphate + H(+). The protein operates within pyrimidine metabolism; dUMP biosynthesis; dUMP from dCTP (dUTP route): step 2/2. In terms of biological role, this enzyme is involved in nucleotide metabolism: it produces dUMP, the immediate precursor of thymidine nucleotides and it decreases the intracellular concentration of dUTP so that uracil cannot be incorporated into DNA. This Citrifermentans bemidjiense (strain ATCC BAA-1014 / DSM 16622 / JCM 12645 / Bem) (Geobacter bemidjiensis) protein is Deoxyuridine 5'-triphosphate nucleotidohydrolase.